Reading from the N-terminus, the 363-residue chain is 1-aminocyclopropane-1-carboxylate oxidase homolog (363 aa).

Residues 212–312 (FHLFCSCNYY…MSITCFFGES (101 aa)) enclose the Fe2OG dioxygenase domain. Residues His236, Asp238, and His292 each contribute to the Fe cation site.

The protein belongs to the iron/ascorbate-dependent oxidoreductase family.

The sequence is that of 1-aminocyclopropane-1-carboxylate oxidase homolog (ACO3) from Solanum lycopersicum (Tomato).